Reading from the N-terminus, the 877-residue chain is EF-hand domain-containing family member B (877 aa).

Disordered stretches follow at residues 1-47 (MCSF…GRKS) and 268-290 (AQQP…PDRI). EF-hand domains lie at 605 to 640 (QNFD…ACLH) and 641 to 676 (LDEK…KDKT). Positions 618, 622, 629, 654, 656, 658, and 665 each coordinate Ca(2+).

In terms of assembly, microtubule inner protein component of sperm flagellar doublet microtubules. Interacts with STIM1 and ORAI1; the interactions take place upon Ca(2+)-store depletion and dissociate through a Ca(2+)-dependent mechanism. Interaction with STIM1 inhibits STIM1 interaction with SARAF. Expressed in trachea multiciliated cells.

It localises to the cytoplasm. The protein localises to the cytoskeleton. Its subcellular location is the cilium axoneme. The protein resides in the flagellum axoneme. Microtubule inner protein (MIP) part of the dynein-decorated doublet microtubules (DMTs) in cilia axoneme, which is required for motile cilia beating. Cytosolic sensor for calcium, modulates the interaction of STIM1 and ORAI1 upon store depletion and the activation of store-operated Ca(2+) entry (SOCE) and NFAT translocation from cytosol to nucleus. The polypeptide is EF-hand domain-containing family member B (Bos taurus (Bovine)).